The chain runs to 175 residues: Crossover junction endodeoxyribonuclease RuvC (175 aa).

Residues aspartate 16, glutamate 76, and aspartate 148 contribute to the active site. Mg(2+)-binding residues include aspartate 16, glutamate 76, and aspartate 148.

Belongs to the RuvC family. Homodimer which binds Holliday junction (HJ) DNA. The HJ becomes 2-fold symmetrical on binding to RuvC with unstacked arms; it has a different conformation from HJ DNA in complex with RuvA. In the full resolvosome a probable DNA-RuvA(4)-RuvB(12)-RuvC(2) complex forms which resolves the HJ. Requires Mg(2+) as cofactor.

The protein localises to the cytoplasm. It carries out the reaction Endonucleolytic cleavage at a junction such as a reciprocal single-stranded crossover between two homologous DNA duplexes (Holliday junction).. The RuvA-RuvB-RuvC complex processes Holliday junction (HJ) DNA during genetic recombination and DNA repair. Endonuclease that resolves HJ intermediates. Cleaves cruciform DNA by making single-stranded nicks across the HJ at symmetrical positions within the homologous arms, yielding a 5'-phosphate and a 3'-hydroxyl group; requires a central core of homology in the junction. The consensus cleavage sequence is 5'-(A/T)TT(C/G)-3'. Cleavage occurs on the 3'-side of the TT dinucleotide at the point of strand exchange. HJ branch migration catalyzed by RuvA-RuvB allows RuvC to scan DNA until it finds its consensus sequence, where it cleaves and resolves the cruciform DNA. In Bradyrhizobium diazoefficiens (strain JCM 10833 / BCRC 13528 / IAM 13628 / NBRC 14792 / USDA 110), this protein is Crossover junction endodeoxyribonuclease RuvC.